The chain runs to 591 residues: Paxillin (591 aa).

An N-acetylmethionine modification is found at Met1. The LD motif 1 signature appears at 3-15; it reads DLDALLADLESTT. The disordered stretch occupies residues 17-139; sequence HISKRPVFLS…SPTVMSSSLG (123 aa). Residue Tyr31 is modified to Phosphotyrosine; by PTK6. Residues 45–54 are compositionally biased toward pro residues; that stretch reads VPPPVPPPPS. Residue Ser83 is modified to Phosphoserine. At Tyr88 the chain carries Phosphotyrosine. The segment covering 89-99 has biased composition (low complexity); sequence SSSAKNSSASN. Ser106 bears the Phosphoserine mark. The residue at position 118 (Tyr118) is a Phosphotyrosine; by PTK6. Ser119, Ser126, and Ser130 each carry phosphoserine. Over residues 121–137 the composition is skewed to polar residues; sequence PNKQKSAEPSPTVMSSS. The residue at position 132 (Thr132) is a Phosphothreonine. 3 positions are modified to phosphoserine: Ser137, Ser140, and Ser143. The LD motif 2 signature appears at 144 to 156; that stretch reads ELDRLLLELNAVQ. The disordered stretch occupies residues 156–261; sequence QHSPPGFPAD…QQQTRISASS (106 aa). Phosphotyrosine is present on Tyr181. The short motif at 216–228 is the LD motif 3 element; it reads SVESLLDELESSV. Ser230 is modified (phosphoserine). The segment covering 236–261 has biased composition (polar residues); the sequence is TVNQGEMSSPQRVTSSQQQTRISASS. Position 244 is a phosphoserine; by CDK5 (Ser244). A phosphoserine mark is found at Ser250, Ser258, Ser261, Ser272, Ser303, Ser322, Ser332, and Ser340. The required for binding to PARVA and ILK stretch occupies residues 262-315; the sequence is ATRELDELMASLSDFKMQGLEQRVDGERPWAAGWPPSSRQSSPEGQDEGGFMAQ. Positions 265–276 match the LD motif 4 motif; the sequence is ELDELMASLSDF. Residues 289-338 form a disordered region; the sequence is RPWAAGWPPSSRQSSPEGQDEGGFMAQGKTGSSSPPGGLSKPGSQLDSML. Low complexity predominate over residues 315-334; that stretch reads QGKTGSSSPPGGLSKPGSQL. The LD motif 5 motif lies at 333-345; that stretch reads QLDSMLGSLQSDL. 4 LIM zinc-binding domains span residues 356 to 415, 416 to 473, 474 to 533, and 534 to 591; these read GVCG…LFSP, RCYY…DMFA, PKCG…RRGS, and LCSG…KLFC. Ser533 carries the phosphoserine modification.

Belongs to the paxillin family. As to quaternary structure, interacts in vitro with VCL/vinculin as well as to the SH3 domain of SRC and, when tyrosine phosphorylated, to the SH2 domain of CRK. Interacts with GIT1. Interacts with NUDT16L1/SDOS. Interacts with PTK2/FAK1. Interacts with PTK2B/PYK2. Interacts with ASAP2. Interacts with unphosphorylated ITGA4. Interacts with RNF5. Interacts with PDCD10. Interacts with NEK3, the interaction is prolactin-dependent. Interacts with PTK6. Interacts with TGFB1I1. Interacts with SORBS1. Interacts with PARVB. Interacts (via LD motif 4) with PARVA/PARVIN. Interacts (via LD motif 4) with ILK. Interacts (via cytoplasmic domain) with CEACAM1; the interaction is phosphotyrosyl-dependent. Interacts with LIMA1; this complex stabilizes actin dynamics. Interacts with CD36 (via C-terminus). Interacts with TRIM15. Interacts with PAK4; PAK4 acts as a scaffold to suppport PAXI phosphorylation at Ser-272. Post-translationally, phosphorylated by MAPK1/ERK2. Phosphorylated on tyrosine residues during integrin-mediated cell adhesion, embryonic development, fibroblast transformation and following stimulation of cells by mitogens. Phosphorylation at Ser-244 by CDK5 reduces its interaction with PTK2/FAK1 in matrix-cell focal adhesions (MCFA) during oligodendrocytes (OLs) differentiation. Phosphorylation at Tyr-31 and Tyr-118 by PTK6 promote the activation of RAC1 via CRK/CrKII, thereby promoting migration and invasion. Phosphorylation at Ser-250 by SLK is required for PXN redistribution and cell motility. Phosphorylation at Ser-272 promotes focal adhesion disassembly during cell migration.

The protein localises to the cytoplasm. It localises to the cytoskeleton. The protein resides in the cell junction. Its subcellular location is the focal adhesion. It is found in the cell cortex. Cytoskeletal protein involved in actin-membrane attachment at sites of cell adhesion to the extracellular matrix (focal adhesion). Recruits other proteins such as TRIM15 to focal adhesion. This Mus musculus (Mouse) protein is Paxillin.